We begin with the raw amino-acid sequence, 305 residues long: Virulence plasmid integrase pGP7-D (305 aa).

A Core-binding (CB) domain is found at Leu-13–Tyr-99. The 179-residue stretch at Ile-127–Leu-305 folds into the Tyr recombinase domain. Residues Lys-188 and Arg-257 contribute to the active site. Tyr-289 (O-(3'-phospho-DNA)-tyrosine intermediate) is an active-site residue.

The protein belongs to the 'phage' integrase family.

The sequence is that of Virulence plasmid integrase pGP7-D from Chlamydia trachomatis serovar L2 (strain ATCC VR-902B / DSM 19102 / 434/Bu).